The primary structure comprises 335 residues: Anthranilate phosphoribosyltransferase (335 aa).

5-phospho-alpha-D-ribose 1-diphosphate is bound by residues glycine 79, 82–83 (GD), serine 87, 89–92 (NIST), 107–115 (KHGNRSITS), and serine 119. Glycine 79 lines the anthranilate pocket. Serine 91 is a Mg(2+) binding site. Anthranilate is bound at residue asparagine 110. Arginine 165 contributes to the anthranilate binding site. The Mg(2+) site is built by aspartate 224 and glutamate 225.

Belongs to the anthranilate phosphoribosyltransferase family. In terms of assembly, homodimer. The cofactor is Mg(2+).

It catalyses the reaction N-(5-phospho-beta-D-ribosyl)anthranilate + diphosphate = 5-phospho-alpha-D-ribose 1-diphosphate + anthranilate. Its pathway is amino-acid biosynthesis; L-tryptophan biosynthesis; L-tryptophan from chorismate: step 2/5. Functionally, catalyzes the transfer of the phosphoribosyl group of 5-phosphorylribose-1-pyrophosphate (PRPP) to anthranilate to yield N-(5'-phosphoribosyl)-anthranilate (PRA). In Lactococcus lactis subsp. cremoris (strain MG1363), this protein is Anthranilate phosphoribosyltransferase.